Here is a 445-residue protein sequence, read N- to C-terminus: Inward rectifier potassium channel 4 (445 aa).

Residues 1 to 55 (MHGHSRNGQAHVPRRKRRNRFVKKNGQCNVYFANLSNKSQRYMADIFTTCVDTRW) are Cytoplasmic-facing. A helical transmembrane segment spans residues 56 to 80 (RYMLMIFSAAFLVSWLFFGLLFWCI). The Extracellular portion of the chain corresponds to 81 to 120 (AFFHGDLEASPGVPAAGGPAAGGGGAAPVAPKPCIMHVNG). Positions 91 to 111 (PGVPAAGGPAAGGGGAAPVAP) are val/Gly/Ala/Pro stretch. Positions 121 to 132 (FLGAFLFSVETQ) form an intramembrane region, helical; Pore-forming. The pore-forming intramembrane region spans 133–139 (TTIGYGF). The Selectivity filter motif lies at 134–139 (TIGYGF). The Extracellular portion of the chain corresponds to 140–148 (RCVTEECPL). Residues 149–170 (AVIAVVVQSIVGCVIDSFMIGT) form a helical membrane-spanning segment. Over 171–445 (IMAKMARPKK…NISYRRESAI (275 aa)) the chain is Cytoplasmic. A PDZ-binding motif is present at residues 443-445 (SAI).

This sequence belongs to the inward rectifier-type potassium channel (TC 1.A.2.1) family. KCNJ4 subfamily. Homomultimeric and heteromultimeric association with KCNJ2 and KCNJ12. Interacts with DLG2 and DLG4. Associates, via its PDZ-recognition domain, with a complex containing LIN7A, LIN7B, LIN7C, DLG1, CASK and APBA1. Interacts with TAX1BP3. TAX1BP3 competes with LIN7 family members for KCNJ4 binding. In terms of tissue distribution, heart, skeletal muscle, and several different brain regions including the hippocampus.

The protein resides in the cell membrane. Its subcellular location is the postsynaptic cell membrane. It is found in the cytoplasmic vesicle membrane. The enzyme catalyses K(+)(in) = K(+)(out). Inward rectifier potassium channels are characterized by a greater tendency to allow potassium to flow into the cell rather than out of it. Their voltage dependence is regulated by the concentration of extracellular potassium; as external potassium is raised, the voltage range of the channel opening shifts to more positive voltages. The inward rectification is mainly due to the blockage of outward current by internal magnesium. Can be blocked by extracellular barium and cesium. This chain is Inward rectifier potassium channel 4 (KCNJ4), found in Homo sapiens (Human).